The primary structure comprises 504 residues: Maturase K (504 aa).

The protein belongs to the intron maturase 2 family. MatK subfamily.

It localises to the plastid. It is found in the chloroplast. In terms of biological role, usually encoded in the trnK tRNA gene intron. Probably assists in splicing its own and other chloroplast group II introns. This is Maturase K from Alliaria petiolata (Garlic mustard).